A 79-amino-acid polypeptide reads, in one-letter code: Sec-independent protein translocase protein TatA (79 aa).

The helical transmembrane segment at 1–21 (MHMPSGTQWLIILLIVVLLFG) threads the bilayer.

Belongs to the TatA/E family. As to quaternary structure, the Tat system comprises two distinct complexes: a TatABC complex, containing multiple copies of TatA, TatB and TatC subunits, and a separate TatA complex, containing only TatA subunits. Substrates initially bind to the TatABC complex, which probably triggers association of the separate TatA complex to form the active translocon.

Its subcellular location is the cell inner membrane. Functionally, part of the twin-arginine translocation (Tat) system that transports large folded proteins containing a characteristic twin-arginine motif in their signal peptide across membranes. TatA could form the protein-conducting channel of the Tat system. The sequence is that of Sec-independent protein translocase protein TatA from Campylobacter lari (strain RM2100 / D67 / ATCC BAA-1060).